Here is a 128-residue protein sequence, read N- to C-terminus: Large ribosomal subunit protein bL17 (128 aa).

The protein belongs to the bacterial ribosomal protein bL17 family. As to quaternary structure, part of the 50S ribosomal subunit. Contacts protein L32.

This Baumannia cicadellinicola subsp. Homalodisca coagulata protein is Large ribosomal subunit protein bL17.